The following is a 399-amino-acid chain: S-adenosylmethionine synthase (399 aa).

Histidine 16 is a binding site for ATP. Aspartate 18 serves as a coordination point for Mg(2+). Position 44 (glutamate 44) interacts with K(+). Residues glutamate 57 and glutamine 100 each coordinate L-methionine. The flexible loop stretch occupies residues 100–110 (QSSDIAQGVNE). ATP contacts are provided by residues 177 to 179 (DAK), 244 to 245 (RF), aspartate 253, 259 to 260 (RK), alanine 276, and lysine 280. Aspartate 253 is an L-methionine binding site. Lysine 284 contributes to the L-methionine binding site.

Belongs to the AdoMet synthase family. In terms of assembly, homotetramer; dimer of dimers. Mg(2+) is required as a cofactor. The cofactor is K(+).

It is found in the cytoplasm. It carries out the reaction L-methionine + ATP + H2O = S-adenosyl-L-methionine + phosphate + diphosphate. Its pathway is amino-acid biosynthesis; S-adenosyl-L-methionine biosynthesis; S-adenosyl-L-methionine from L-methionine: step 1/1. Catalyzes the formation of S-adenosylmethionine (AdoMet) from methionine and ATP. The overall synthetic reaction is composed of two sequential steps, AdoMet formation and the subsequent tripolyphosphate hydrolysis which occurs prior to release of AdoMet from the enzyme. The protein is S-adenosylmethionine synthase of Lactococcus lactis subsp. lactis (strain IL1403) (Streptococcus lactis).